Consider the following 505-residue polypeptide: 2-isopropylmalate synthase (505 aa).

Positions Val-5 to Tyr-267 constitute a Pyruvate carboxyltransferase domain. Residues Asp-14, His-202, His-204, and Asn-238 each coordinate Mn(2+). A regulatory domain region spans residues Thr-391–Lys-505.

It belongs to the alpha-IPM synthase/homocitrate synthase family. LeuA type 1 subfamily. Homodimer. The cofactor is Mn(2+).

The protein resides in the cytoplasm. The catalysed reaction is 3-methyl-2-oxobutanoate + acetyl-CoA + H2O = (2S)-2-isopropylmalate + CoA + H(+). The protein operates within amino-acid biosynthesis; L-leucine biosynthesis; L-leucine from 3-methyl-2-oxobutanoate: step 1/4. Functionally, catalyzes the condensation of the acetyl group of acetyl-CoA with 3-methyl-2-oxobutanoate (2-ketoisovalerate) to form 3-carboxy-3-hydroxy-4-methylpentanoate (2-isopropylmalate). The polypeptide is 2-isopropylmalate synthase (Pelotomaculum thermopropionicum (strain DSM 13744 / JCM 10971 / SI)).